The following is a 75-amino-acid chain: Sec-independent protein translocase protein TatA (75 aa).

Residues 1–21 (MGISIWQLLIVLGIVILLFGT) traverse the membrane as a helical segment. Residues 41-75 (SMSDEEEKNAEQQPLEKQNAEQQAQAEDKPKEKQG) form a disordered region. The segment covering 56 to 65 (EKQNAEQQAQ) has biased composition (low complexity). Residues 66 to 75 (AEDKPKEKQG) show a composition bias toward basic and acidic residues.

Belongs to the TatA/E family. The Tat system comprises two distinct complexes: a TatABC complex, containing multiple copies of TatA, TatB and TatC subunits, and a separate TatA complex, containing only TatA subunits. Substrates initially bind to the TatABC complex, which probably triggers association of the separate TatA complex to form the active translocon.

It is found in the cell inner membrane. Functionally, part of the twin-arginine translocation (Tat) system that transports large folded proteins containing a characteristic twin-arginine motif in their signal peptide across membranes. TatA could form the protein-conducting channel of the Tat system. The protein is Sec-independent protein translocase protein TatA of Marinobacter nauticus (strain ATCC 700491 / DSM 11845 / VT8) (Marinobacter aquaeolei).